A 135-amino-acid polypeptide reads, in one-letter code: Putative pre-16S rRNA nuclease (135 aa).

The protein belongs to the YqgF nuclease family.

It localises to the cytoplasm. Its function is as follows. Could be a nuclease involved in processing of the 5'-end of pre-16S rRNA. The polypeptide is Putative pre-16S rRNA nuclease (Maridesulfovibrio salexigens (strain ATCC 14822 / DSM 2638 / NCIMB 8403 / VKM B-1763) (Desulfovibrio salexigens)).